The following is a 415-amino-acid chain: DNA polymerase IV (415 aa).

Positions 15–196 constitute a UmuC domain; that stretch reads ILHVDMNCFF…LPVGAMHGIG (182 aa). Residues Asp-19 and Asp-115 each contribute to the Mg(2+) site. The active site involves Glu-116. The segment at 238 to 260 is disordered; that stretch reads KGMDDRQVDPSQMGQHKSVGNSM. The segment covering 246 to 260 has biased composition (polar residues); it reads DPSQMGQHKSVGNSM.

Belongs to the DNA polymerase type-Y family. In terms of assembly, monomer. Mg(2+) serves as cofactor.

The protein localises to the cytoplasm. The catalysed reaction is DNA(n) + a 2'-deoxyribonucleoside 5'-triphosphate = DNA(n+1) + diphosphate. Its function is as follows. Poorly processive, error-prone DNA polymerase involved in untargeted mutagenesis. Copies undamaged DNA at stalled replication forks, which arise in vivo from mismatched or misaligned primer ends. These misaligned primers can be extended by PolIV. Exhibits no 3'-5' exonuclease (proofreading) activity. May be involved in translesional synthesis, in conjunction with the beta clamp from PolIII. In Bacillus cereus (strain ZK / E33L), this protein is DNA polymerase IV.